The chain runs to 142 residues: Universal stress protein D (142 aa).

It belongs to the universal stress protein A family.

The protein localises to the cytoplasm. Its function is as follows. Required for resistance to DNA-damaging agents. This Escherichia coli (strain K12) protein is Universal stress protein D (uspD).